The primary structure comprises 307 residues: tRNA pseudouridine synthase B (307 aa).

The Nucleophile role is filled by Asp47.

This sequence belongs to the pseudouridine synthase TruB family. Type 1 subfamily.

It catalyses the reaction uridine(55) in tRNA = pseudouridine(55) in tRNA. Responsible for synthesis of pseudouridine from uracil-55 in the psi GC loop of transfer RNAs. The sequence is that of tRNA pseudouridine synthase B from Chromohalobacter salexigens (strain ATCC BAA-138 / DSM 3043 / CIP 106854 / NCIMB 13768 / 1H11).